The following is a 209-amino-acid chain: Ribosomal RNA large subunit methyltransferase E (209 aa).

S-adenosyl-L-methionine contacts are provided by G63, W65, D83, D99, and D124. The active-site Proton acceptor is the K164.

It belongs to the class I-like SAM-binding methyltransferase superfamily. RNA methyltransferase RlmE family.

The protein resides in the cytoplasm. The enzyme catalyses uridine(2552) in 23S rRNA + S-adenosyl-L-methionine = 2'-O-methyluridine(2552) in 23S rRNA + S-adenosyl-L-homocysteine + H(+). In terms of biological role, specifically methylates the uridine in position 2552 of 23S rRNA at the 2'-O position of the ribose in the fully assembled 50S ribosomal subunit. The polypeptide is Ribosomal RNA large subunit methyltransferase E (Alkalilimnicola ehrlichii (strain ATCC BAA-1101 / DSM 17681 / MLHE-1)).